The chain runs to 201 residues: Putative lipoprotein LppC (201 aa).

Residues 1 to 23 (MTSTLHRTPLATAGLALVVALGG) form the signal peptide. Cysteine 24 carries N-palmitoyl cysteine lipidation. Cysteine 24 carries S-diacylglycerol cysteine lipidation. Prevents bacterial uptake by a human macrophage-like cell line stretches follow at residues 77-96 (GANVAPPLTWSSPAGAAELA), 97-116 (LVVDDPDAVGGLYVHWIVTG), and 117-136 (IAPGSGSTADGQTPAGGHSV). Residues 122–141 (GSTADGQTPAGGHSVPNSGG) are disordered.

It belongs to the UPF0098 family.

Its subcellular location is the cell membrane. The protein localises to the cell surface. Probably involved in bacterial recognition and uptake by its host (human). The protein is Putative lipoprotein LppC of Mycobacterium tuberculosis (strain ATCC 25618 / H37Rv).